The sequence spans 380 residues: Gap junction gamma-1 protein (380 aa).

The Cytoplasmic segment spans residues 1–22 (MSWSFLTRLLDEISNHSTFVGK). A helical transmembrane segment spans residues 23–45 (IWLTLFIIFRIVLTVVGGESIYY). Topologically, residues 46–75 (DEQSKFVCNTQQPGCENVCYDAFAPLSHVR) are extracellular. The chain crosses the membrane as a helical span at residues 76-95 (FWVFQIILITTPTIMYLGFA). Residues 96–171 (MHKIARSNDV…RRIKRDGLMK (76 aa)) lie on the Cytoplasmic side of the membrane. The chain crosses the membrane as a helical span at residues 172 to 194 (VYILQLLSRIIFEVGFLFGQYIL). Over 195 to 228 (YGFEVAPSYVCTRSPCPHTVDCFVSRPTEKTIFL) the chain is Extracellular. A helical membrane pass occupies residues 229-251 (LIMYAVSCLCLSLTVLEILHLGL). Topologically, residues 252-380 (SGIRDAFRRR…GSKCEKGIHA (129 aa)) are cytoplasmic. The interval 337–380 (AYQNGESSPSRSSSPESNGTAVEQNRLNFAQEKQGSKCEKGIHA) is disordered. The span at 342-353 (ESSPSRSSSPES) shows a compositional bias: low complexity. Positions 354-369 (NGTAVEQNRLNFAQEK) are enriched in polar residues. A compositionally biased stretch (basic and acidic residues) spans 370-380 (QGSKCEKGIHA).

The protein belongs to the connexin family. Gamma-type subfamily. In terms of assembly, a connexon is composed of a hexamer of connexins.

The protein resides in the cell membrane. It localises to the cell junction. Its subcellular location is the gap junction. In terms of biological role, one gap junction consists of a cluster of closely packed pairs of transmembrane channels, the connexons, through which materials of low MW diffuse from one cell to a neighboring cell. Participates in a developmental pathway for formation of the notochord and tail. The protein is Gap junction gamma-1 protein (gjc1) of Danio rerio (Zebrafish).